The primary structure comprises 304 residues: Bifunctional protein FolD (304 aa).

Residues 176–178 (GAS), Ile-201, and Ile-242 contribute to the NADP(+) site.

The protein belongs to the tetrahydrofolate dehydrogenase/cyclohydrolase family. In terms of assembly, homodimer.

The catalysed reaction is (6R)-5,10-methylene-5,6,7,8-tetrahydrofolate + NADP(+) = (6R)-5,10-methenyltetrahydrofolate + NADPH. It carries out the reaction (6R)-5,10-methenyltetrahydrofolate + H2O = (6R)-10-formyltetrahydrofolate + H(+). It functions in the pathway one-carbon metabolism; tetrahydrofolate interconversion. Its function is as follows. Catalyzes the oxidation of 5,10-methylenetetrahydrofolate to 5,10-methenyltetrahydrofolate and then the hydrolysis of 5,10-methenyltetrahydrofolate to 10-formyltetrahydrofolate. In Gluconobacter oxydans (strain 621H) (Gluconobacter suboxydans), this protein is Bifunctional protein FolD.